The chain runs to 239 residues: 2,3,4,5-tetrahydropyridine-2,6-dicarboxylate N-acetyltransferase (239 aa).

It belongs to the transferase hexapeptide repeat family. DapH subfamily.

It carries out the reaction (S)-2,3,4,5-tetrahydrodipicolinate + acetyl-CoA + H2O = L-2-acetamido-6-oxoheptanedioate + CoA. It functions in the pathway amino-acid biosynthesis; L-lysine biosynthesis via DAP pathway; LL-2,6-diaminopimelate from (S)-tetrahydrodipicolinate (acetylase route): step 1/3. Catalyzes the transfer of an acetyl group from acetyl-CoA to tetrahydrodipicolinate. This Staphylococcus saprophyticus subsp. saprophyticus (strain ATCC 15305 / DSM 20229 / NCIMB 8711 / NCTC 7292 / S-41) protein is 2,3,4,5-tetrahydropyridine-2,6-dicarboxylate N-acetyltransferase.